We begin with the raw amino-acid sequence, 284 residues long: Cytosolic Fe-S cluster assembly factor NUBP2 homolog (284 aa).

Residue 27–34 (GKGGVGKS) participates in ATP binding. Cysteine 200 and cysteine 203 together coordinate [4Fe-4S] cluster.

The protein belongs to the Mrp/NBP35 ATP-binding proteins family. NUBP2/CFD1 subfamily. Heterotetramer of 2 NUBP1 and 2 NUBP2 chains. [4Fe-4S] cluster is required as a cofactor.

It localises to the cytoplasm. Functionally, component of the cytosolic iron-sulfur (Fe/S) protein assembly (CIA) machinery. Required for maturation of extramitochondrial Fe-S proteins. The NUBP1-NUBP2 heterotetramer forms a Fe-S scaffold complex, mediating the de novo assembly of an Fe-S cluster and its transfer to target apoproteins. The sequence is that of Cytosolic Fe-S cluster assembly factor NUBP2 homolog from Monosiga brevicollis (Choanoflagellate).